The sequence spans 926 residues: Alpha-L-rhamnosidase (926 aa).

Positions 1–25 are cleaved as a signal peptide; it reads MILHKSVFKSYIYVLTYFVFFSVMS. Cysteine 26 carries the N-palmitoyl cysteine lipid modification. Cysteine 26 carries S-diacylglycerol cysteine lipidation. Residues aspartate 504, 508–510, aspartate 517, and tryptophan 569 contribute to the alpha-L-rhamnose site; that span reads RDE. Glutamate 510 functions as the Proton donor in the catalytic mechanism. Catalysis depends on glutamate 779, which acts as the Proton acceptor. Position 800 (histidine 800) interacts with alpha-L-rhamnose.

This sequence belongs to the glycosyl hydrolase 78 family.

It is found in the cell membrane. The catalysed reaction is Hydrolysis of terminal non-reducing alpha-L-rhamnose residues in alpha-L-rhamnosides.. Functionally, alpha-L-rhamnosidase involved in ulvan degradation. Ulvan is the main polysaccharide component of the Ulvales (green seaweed) cell wall. It is composed of disaccharide building blocks comprising 3-sulfated rhamnose (Rha3S) linked to D-glucuronic acid (GlcA), L-iduronic acid (IduA), or D-xylose (Xyl). Alpha-L-rhamnosidase converts Rha-Xyl-Rha3S, the product of a sulfatase acting on Rha3S-Xyl-Rha3S oligosaccharides, to Rha and Xyl-Rha3S. The enzyme is able to degrade p-nitrophenyl-alpha-L-rhamnopyranoside (PNP-Rha) in vitro. In Formosa agariphila (strain DSM 15362 / KCTC 12365 / LMG 23005 / KMM 3901 / M-2Alg 35-1), this protein is Alpha-L-rhamnosidase.